The sequence spans 357 residues: Adenylate isopentenyltransferase 1, chloroplastic (357 aa).

A chloroplast-targeting transit peptide spans 1-71 (MTELNFHLLP…NRKDKVVVIL (71 aa)). Residues 20–39 (TTTSPSFSSHSSSSSSLLSF) show a composition bias toward low complexity. The tract at residues 20–58 (TTTSPSFSSHSSSSSSLLSFTKRRRKHQPLVSSIRMEQS) is disordered. ATP is bound at residue 72-79 (GATGAGKS).

The protein belongs to the IPP transferase family. As to expression, expressed in the vascular stele of the roots, in the xylem precursor cell files in the root tip, in leaf axils, ovules, and immature seeds.

It is found in the plastid. The protein resides in the chloroplast. It catalyses the reaction dimethylallyl diphosphate + AMP = N(6)-(dimethylallyl)adenosine 5'-phosphate + diphosphate. It carries out the reaction dimethylallyl diphosphate + ADP = N(6)-(dimethylallyl)adenosine 5'-diphosphate + diphosphate. The catalysed reaction is dimethylallyl diphosphate + ATP = N(6)-(dimethylallyl)adenosine 5'-triphosphate + diphosphate. Functionally, involved in cytokinin biosynthesis. Catalyzes the transfer of an isopentenyl group from dimethylallyl diphosphate (DMAPP) to ATP, ADP and AMP. Adenine, adenosine, isopentenylpyrophosphate and 1-hydroxy-2-methyl-2-(E)-butenyl 4-diphosphate (HMBDP) are not used as substrates. The chain is Adenylate isopentenyltransferase 1, chloroplastic (IPT1) from Arabidopsis thaliana (Mouse-ear cress).